Reading from the N-terminus, the 179-residue chain is Large ribosomal subunit protein uL5 (179 aa).

This sequence belongs to the universal ribosomal protein uL5 family. Part of the 50S ribosomal subunit; part of the 5S rRNA/L5/L18/L25 subcomplex. Contacts the 5S rRNA and the P site tRNA. Forms a bridge to the 30S subunit in the 70S ribosome.

Functionally, this is one of the proteins that bind and probably mediate the attachment of the 5S RNA into the large ribosomal subunit, where it forms part of the central protuberance. In the 70S ribosome it contacts protein S13 of the 30S subunit (bridge B1b), connecting the 2 subunits; this bridge is implicated in subunit movement. Contacts the P site tRNA; the 5S rRNA and some of its associated proteins might help stabilize positioning of ribosome-bound tRNAs. The polypeptide is Large ribosomal subunit protein uL5 (Prochlorococcus marinus (strain NATL2A)).